A 169-amino-acid polypeptide reads, in one-letter code: Capsid protein (169 aa).

This sequence belongs to the nanoviridae capsid protein family.

Its subcellular location is the virion. This is Capsid protein (DNA-S) from Subterranean clover stunt virus (strain F) (SCSV).